The sequence spans 701 residues: L-glutamate oxidase precursor (701 aa).

A signal peptide spans 1–14 (MTTDTARRHTGAER). FAD is bound by residues alanine 69, glutamate 88, alanine 89, arginine 97, methionine 123, arginine 124, methionine 354, and serine 409. The propeptide occupies 481-520 (LALPQSVRNLPTGLLGAHPSVDESRIGEEQVEYYRNSELR). The FAD site is built by glutamate 645, tryptophan 653, and isoleucine 654. Positions 684–701 (RRGAAAATEPMREEALTS) are excised as a propeptide.

Belongs to the flavin monoamine oxidase family. LGOX subfamily. In terms of assembly, the LGOX precursor forms homodimers. The mature enzyme is a heterohexamer composed of 2 alpha chains, 2 beta chains and 2 gamma chains (alpha2beta2gamma2). The cofactor is FAD. In terms of processing, the precursor form is proteolytically cleaved by an endopeptidase into alpha, beta and gamma chains, which form the stable mature enzyme. Activation by proteolysis occurs after secretion.

The protein resides in the secreted. It catalyses the reaction L-glutamate + O2 + H2O = H2O2 + 2-oxoglutarate + NH4(+). Its activity is regulated as follows. Produced as a single polypeptide precursor and is activated by proteolytic cleavage. The LGOX precursor is an active enzyme, but it exhibits lower catalytic efficiency and lower thermostability compared with the mature hexameric LGOX. The mature form is strongly inhibited by p-chloromercuribenzoate, but not by CuCl(2), EDTA and diethyldithiocarbamate. In terms of biological role, catalyzes the oxidative deamination of L-glutamate to 2-ketoglutarate along with the production of ammonia and hydrogen peroxide. Shows strict substrate specificity for L-glutamate, and exhibits only very weak activity with L-aspartate. The sequence is that of L-glutamate oxidase precursor from Streptomyces sp.